Reading from the N-terminus, the 283-residue chain is Pantothenate synthetase (283 aa).

30 to 37 contacts ATP; sequence MGNLHSGH. Residue His-37 is the Proton donor of the active site. Gln-61 is a (R)-pantoate binding site. Gln-61 lines the beta-alanine pocket. Position 149 to 152 (149 to 152) interacts with ATP; that stretch reads GQKD. Gln-155 is a binding site for (R)-pantoate. Residues Val-178 and 186-189 contribute to the ATP site; that span reads LSSR.

It belongs to the pantothenate synthetase family. In terms of assembly, homodimer.

Its subcellular location is the cytoplasm. It carries out the reaction (R)-pantoate + beta-alanine + ATP = (R)-pantothenate + AMP + diphosphate + H(+). It functions in the pathway cofactor biosynthesis; (R)-pantothenate biosynthesis; (R)-pantothenate from (R)-pantoate and beta-alanine: step 1/1. In terms of biological role, catalyzes the condensation of pantoate with beta-alanine in an ATP-dependent reaction via a pantoyl-adenylate intermediate. In Pseudomonas fluorescens (strain SBW25), this protein is Pantothenate synthetase.